The following is a 420-amino-acid chain: RING finger protein 39 (420 aa).

The RING-type zinc-finger motif lies at 88 to 135; that stretch reads CPLCGGSFEDPVLLACEHSFCRACLARRWGTPPATGTEASPTACPCCG. In terms of domain architecture, B30.2/SPRY spans 210–420; that stretch reads DDLPEDYPVV…APLRIVPAES (211 aa).

In terms of tissue distribution, expressed in testis.

It localises to the cytoplasm. The catalysed reaction is S-ubiquitinyl-[E2 ubiquitin-conjugating enzyme]-L-cysteine + [acceptor protein]-L-lysine = [E2 ubiquitin-conjugating enzyme]-L-cysteine + N(6)-ubiquitinyl-[acceptor protein]-L-lysine.. It participates in protein modification; protein ubiquitination. Plays an inhibitory role in anti-RNA viral innate immunity by targeting the adapter DDX3X and promoting its 'Lys-48'-linked polyubiquitination. Alternatively, enhances the cGAS-STING pathway activation by promoting 'Lys-63'-linked ubiquitination of STING1, facilitating the STING1-TBK1 complex formation and STING1 activation. Functionally, (Microbial infection) Plays a positive role in human immunodeficiency virus (HIV-1) replication. This is RING finger protein 39 (RNF39) from Homo sapiens (Human).